We begin with the raw amino-acid sequence, 431 residues long: Isocitrate lyase (431 aa).

A disordered region spans residues 1–21 (MSNVGTPRTAQEIQQDWDTNP). 93–95 (SGW) serves as a coordination point for substrate. Asp155 is a binding site for Mg(2+). Cys193 acts as the Proton acceptor in catalysis. Substrate contacts are provided by residues 194–195 (GH), Arg230, 315–319 (NCSPS), and Thr349.

It belongs to the isocitrate lyase/PEP mutase superfamily. Isocitrate lyase family. As to quaternary structure, homotetramer. The cofactor is Mg(2+).

It catalyses the reaction D-threo-isocitrate = glyoxylate + succinate. It participates in carbohydrate metabolism; glyoxylate cycle; (S)-malate from isocitrate: step 1/2. Functionally, involved in the metabolic adaptation in response to environmental changes. Catalyzes the reversible formation of succinate and glyoxylate from isocitrate, a key step of the glyoxylate cycle, which operates as an anaplerotic route for replenishing the tricarboxylic acid cycle during growth on fatty acid substrates. In Corynebacterium efficiens (strain DSM 44549 / YS-314 / AJ 12310 / JCM 11189 / NBRC 100395), this protein is Isocitrate lyase (aceA).